The sequence spans 320 residues: Ciliary microtubule inner protein 2A (320 aa).

The protein belongs to the CIMIP2 family. In terms of assembly, microtubule inner protein component of sperm flagellar doublet microtubules. Expressed in sperm.

The protein localises to the cytoplasm. Its subcellular location is the cytoskeleton. The protein resides in the flagellum axoneme. In terms of biological role, microtubule inner protein (MIP) part of the dynein-decorated doublet microtubules (DMTs) in flagellum axoneme. Binds to the intra-tubulin interfaces. The protein is Ciliary microtubule inner protein 2A (CIMIP2A) of Bos taurus (Bovine).